Reading from the N-terminus, the 494-residue chain is Alpha-amylase-related protein (494 aa).

The N-terminal stretch at 1–20 (MIKFALALTLCLAGASLSLA) is a signal peptide. Residue glutamine 21 is modified to Pyrrolidone carboxylic acid. Cysteine 48 and cysteine 104 are disulfide-bonded. Asparagine 118, glutamine 169, and aspartate 178 together coordinate Ca(2+). Residues cysteine 157 and cysteine 171 are joined by a disulfide bond. Arginine 206 contacts chloride. Aspartate 208 (nucleophile) is an active-site residue. Histidine 212 lines the Ca(2+) pocket. Glutamate 245 functions as the Proton donor in the catalytic mechanism. Residues asparagine 308 and arginine 343 each contribute to the chloride site. 3 disulfide bridges follow: cysteine 376–cysteine 382, cysteine 418–cysteine 441, and cysteine 448–cysteine 460.

This sequence belongs to the glycosyl hydrolase 13 family. As to quaternary structure, monomer. The cofactor is Ca(2+). Chloride is required as a cofactor.

Its subcellular location is the secreted. It carries out the reaction Endohydrolysis of (1-&gt;4)-alpha-D-glucosidic linkages in polysaccharides containing three or more (1-&gt;4)-alpha-linked D-glucose units.. The protein is Alpha-amylase-related protein (Amyrel) of Drosophila bakoue (Fruit fly).